We begin with the raw amino-acid sequence, 1157 residues long: Zinc finger protein 516 (1157 aa).

Basic and acidic residues predominate over residues 1–13 (MDRSREAEMELRR). Residues 1-26 (MDRSREAEMELRRGPSPPRAGRSHEV) form a disordered region. Residues 1–420 (MDRSREAEME…ATRGKVAEPA (420 aa)) form a mediates promoter DNA-binding and activation of transcription region. C2H2-type zinc fingers lie at residues 34-56 (HSCC…MRKH), 62-84 (YKCP…IRSH), 162-185 (VPCS…HQAH), 188-211 (FKCR…ERDH), 236-258 (FPCE…MKKH), 264-286 (HGCH…MKAH), and 323-345 (EVCT…NAIH). Positions 449-458 (SQEKRKREQD) are enriched in basic and acidic residues. Disordered regions lie at residues 449-503 (SQEK…QGKS) and 523-653 (SRVH…KGPE). Residues 494 to 503 (ASATTGQGKS) are compositionally biased toward polar residues. The C2H2-type 8 zinc finger occupies 504–526 (SECFECGKIFRTYHQMVLHSRVH). A compositionally biased stretch (basic and acidic residues) spans 531-541 (RDRDPEGDRAA). Over residues 550–561 (EGDSASQPSSPG) the composition is skewed to polar residues. Residues 575–585 (EVVDDSGEEAV) show a composition bias toward acidic residues. Polar residues predominate over residues 601 to 612 (GEVTPTALSNGD). A Glycyl lysine isopeptide (Lys-Gly) (interchain with G-Cter in SUMO2) cross-link involves residue Lys630. Over residues 644 to 653 (SSRETTKGPE) the composition is skewed to basic and acidic residues. Lys669 participates in a covalent cross-link: Glycyl lysine isopeptide (Lys-Gly) (interchain with G-Cter in SUMO2). The C2H2-type 9; atypical zinc-finger motif lies at 753-776 (HPCPYCTHKTYYPEVLWMHKRIWH). 2 disordered regions span residues 831–996 (TQVP…EPSV) and 1013–1040 (RGEA…AEGQ). Over residues 914-928 (GSGSLSRSTTPTPSV) the composition is skewed to polar residues. Glycyl lysine isopeptide (Lys-Gly) (interchain with G-Cter in SUMO2) cross-links involve residues Lys1032 and Lys1051. The C2H2-type 10 zinc finger occupies 1092 to 1114 (FVCVECGKSFHQPSQLRAHLRAH). Positions 1123–1157 (PRDSEVHTASTDAPKQGRDHTTPGTVPAGPLRKGI) are disordered.

It belongs to the krueppel C2H2-type zinc-finger protein family. As to quaternary structure, interacts with PRDM16; the interaction is direct and may play a role in the transcription of brown adipose tissue-specific genes. Interacts with PWWP2B. Interacts with HDAC1; this interaction is enhanced in the presence of PWWP2B. As to expression, expressed by adipocytes more specifically in brown adipose tissue compared to white adipose tissue (WAT).

It is found in the nucleus. In terms of biological role, transcriptional regulator that binds to the promoter and activates the transcription of genes promoting brown adipose tissue (BAT) differentiation. Among brown adipose tissue-specific genes, binds the proximal region of the promoter of the UCP1 gene to activate its transcription and thereby regulate thermogenesis. May also play a role in the cellular response to replication stress. This is Zinc finger protein 516 from Mus musculus (Mouse).